The sequence spans 359 residues: E2F transcription factor-like E2FD (359 aa).

2 DNA-binding regions span residues 13–78 and 138–217; these read RKDK…SWKG and RKER…RWLG. 2 disordered regions span residues 255–274 and 288–313; these read RNKS…QNTS and DVKN…NNIR. Positions 293 to 309 are enriched in polar residues; that stretch reads ASGSSTPAGTSESNDMG.

This sequence belongs to the E2F/DP family. As to quaternary structure, monomer. No interactions with DPA or E2FA. In terms of tissue distribution, preferentially expressed in proliferating tissues. Highly expressed in young stalk and young flowers. Lower expression in young leaves and mature flowers. Detected in cotyledonary vascular tissues, the shoot apical meristem, the base of trichomes, the fully developed stomata, the central root cylinder and in the columella of lateral roots but not in the primary root tips or in the leaf epidermal cells.

Its subcellular location is the nucleus. Its function is as follows. Inhibitor of E2F-dependent regulation of gene expression. Binds specifically the E2 recognition site as a monomer without interacting with DP proteins. May be up-regulating E2FA and down-regulating repressors of cell cycle progression. Promotes cell proliferation and represses cell elongation. Regulated by proteolysis via a ubiquitin-proteasome pathway. In Arabidopsis thaliana (Mouse-ear cress), this protein is E2F transcription factor-like E2FD (E2FD).